The following is a 350-amino-acid chain: Cytosolic Fe-S cluster assembly factor NBP35 (350 aa).

The segment at M1 to G30 is disordered. [4Fe-4S] cluster contacts are provided by C14, C28, C31, and C37. G67–S74 lines the ATP pocket.

This sequence belongs to the Mrp/NBP35 ATP-binding proteins family. NUBP1/NBP35 subfamily. Homodimer and homotetramer. Predominantly homodimeric. It depends on [4Fe-4S] cluster as a cofactor.

The protein resides in the cytoplasm. In terms of biological role, component of the cytosolic iron-sulfur (Fe-S) protein assembly (CIA) machinery. Required for maturation of extramitochondrial Fe-S proteins. Functions as a Fe-S scaffold, mediating the de novo assembly of an Fe-S cluster and its transfer to target apoproteins. Essential for embryo development. The chain is Cytosolic Fe-S cluster assembly factor NBP35 from Arabidopsis thaliana (Mouse-ear cress).